Here is a 215-residue protein sequence, read N- to C-terminus: Probable phosphoglycerate mutase GpmB (215 aa).

Substrate contacts are provided by residues 8 to 15 (RHGETQWN), 21 to 22 (QG), Arg58, Arg60, 82 to 85 (ELNM), 104 to 105 (RR), and 151 to 152 (GI). His9 acts as the Tele-phosphohistidine intermediate in catalysis. Glu82 functions as the Proton donor/acceptor in the catalytic mechanism.

It belongs to the phosphoglycerate mutase family. GpmB subfamily.

It carries out the reaction (2R)-2-phosphoglycerate = (2R)-3-phosphoglycerate. The protein operates within carbohydrate degradation; glycolysis; pyruvate from D-glyceraldehyde 3-phosphate: step 3/5. This chain is Probable phosphoglycerate mutase GpmB, found in Escherichia coli O1:K1 / APEC.